We begin with the raw amino-acid sequence, 209 residues long: MAVFKTLTDADIATFSTGLVAGVDEVGRGPLVGDVVTAAVILDPNRPIAGLNDSKKLSEKRREALFDEICEKALSYHVGRASPLEIDELNILHATMLAMQRAVAGLARAPELVLVDGNRSPAFTHQGLTLISHSIVKGDGLIASISAASIIAKVTRDREMDALDAAYPQYGFAKHKGYPTKAHFDAIAEHGVFDQYRKSFKPVKALLER.

In terms of domain architecture, RNase H type-2 spans Gly18–Arg209. Residues Asp24, Glu25, and Asp116 each contribute to the a divalent metal cation site.

This sequence belongs to the RNase HII family. The cofactor is Mn(2+). It depends on Mg(2+) as a cofactor.

It is found in the cytoplasm. It catalyses the reaction Endonucleolytic cleavage to 5'-phosphomonoester.. Endonuclease that specifically degrades the RNA of RNA-DNA hybrids. This Shewanella sp. (strain ANA-3) protein is Ribonuclease HII.